The sequence spans 339 residues: Glycerol-3-phosphate dehydrogenase [NAD(P)+] (339 aa).

The NADPH site is built by S13, W14, and K108. K108, G139, and S141 together coordinate sn-glycerol 3-phosphate. An NADPH-binding site is contributed by A143. Sn-glycerol 3-phosphate-binding residues include K194, D247, S257, R258, and N259. The active-site Proton acceptor is K194. Position 258 (R258) interacts with NADPH. NADPH contacts are provided by V282 and E284.

This sequence belongs to the NAD-dependent glycerol-3-phosphate dehydrogenase family.

The protein localises to the cytoplasm. It catalyses the reaction sn-glycerol 3-phosphate + NAD(+) = dihydroxyacetone phosphate + NADH + H(+). It carries out the reaction sn-glycerol 3-phosphate + NADP(+) = dihydroxyacetone phosphate + NADPH + H(+). It participates in membrane lipid metabolism; glycerophospholipid metabolism. Functionally, catalyzes the reduction of the glycolytic intermediate dihydroxyacetone phosphate (DHAP) to sn-glycerol 3-phosphate (G3P), the key precursor for phospholipid synthesis. The polypeptide is Glycerol-3-phosphate dehydrogenase [NAD(P)+] (Streptococcus mutans serotype c (strain ATCC 700610 / UA159)).